A 90-amino-acid chain; its full sequence is Barrier-to-autointegration factor A (90 aa).

The protein belongs to the BAF family. Homodimer. Interacts with nemp1a and nemp1b. Phosphorylated during S and M phases.

It localises to the nucleus. It is found in the chromosome. Its subcellular location is the nucleus envelope. The protein localises to the cytoplasm. Its function is as follows. Non-specific DNA-binding protein that plays key roles in mitotic nuclear reassembly, chromatin organization, DNA damage response, gene expression and intrinsic immunity against foreign DNA. Contains two non-specific double-stranded DNA (dsDNA)-binding sites which promote DNA cross-bridging. Plays a key role in nuclear membrane reformation at the end of mitosis by driving formation of a single nucleus in a spindle-independent manner. Transiently cross-bridges anaphase chromosomes via its ability to bridge distant DNA sites, leading to the formation of a dense chromatin network at the chromosome ensemble surface that limits membranes to the surface. Also acts as a negative regulator of innate immune activation by restricting CGAS activity toward self-DNA upon acute loss of nuclear membrane integrity. Outcompetes CGAS for DNA-binding, thereby preventing CGAS activation and subsequent damaging autoinflammatory responses. Also involved in DNA damage response; acts by inhibiting the ADP-ribosyltransferase activity of PARP1. Involved in the recognition of exogenous dsDNA in the cytosol: associates with exogenous dsDNA immediately after its appearance in the cytosol at endosome breakdown and is required to avoid autophagy. This Xenopus laevis (African clawed frog) protein is Barrier-to-autointegration factor A (banf1-a).